Reading from the N-terminus, the 253-residue chain is rRNA adenine N-6-methyltransferase (253 aa).

N14, L16, G40, E61, D85, and N101 together coordinate S-adenosyl-L-methionine. Positions 229–253 (CAREESTPRPYLPDCTPTTGSISSR) are disordered. The segment covering 244–253 (TPTTGSISSR) has biased composition (polar residues).

Belongs to the class I-like SAM-binding methyltransferase superfamily. rRNA adenine N(6)-methyltransferase family.

Its function is as follows. Involved in erythromycin resistance. The chain is rRNA adenine N-6-methyltransferase (ermA) from Corynebacterium diphtheriae.